Reading from the N-terminus, the 441-residue chain is Ribosomal protein uS12 methylthiotransferase RimO (441 aa).

The MTTase N-terminal domain occupies 7–117 (PKISFVSLGC…VLDAVHRAKP (111 aa)). [4Fe-4S] cluster contacts are provided by Cys16, Cys52, Cys81, Cys148, Cys152, and Cys155. The Radical SAM core domain maps to 134–371 (LTPRHYAYLK…MARQQAISAR (238 aa)). The region spanning 374-440 (KRKVGTRQQI…AYDLHGTVAG (67 aa)) is the TRAM domain.

Belongs to the methylthiotransferase family. RimO subfamily. [4Fe-4S] cluster serves as cofactor.

Its subcellular location is the cytoplasm. It carries out the reaction L-aspartate(89)-[ribosomal protein uS12]-hydrogen + (sulfur carrier)-SH + AH2 + 2 S-adenosyl-L-methionine = 3-methylsulfanyl-L-aspartate(89)-[ribosomal protein uS12]-hydrogen + (sulfur carrier)-H + 5'-deoxyadenosine + L-methionine + A + S-adenosyl-L-homocysteine + 2 H(+). Catalyzes the methylthiolation of an aspartic acid residue of ribosomal protein uS12. The sequence is that of Ribosomal protein uS12 methylthiotransferase RimO from Rhodopseudomonas palustris (strain HaA2).